The sequence spans 325 residues: 4-hydroxy-3-methylbut-2-enyl diphosphate reductase (325 aa).

A [4Fe-4S] cluster-binding site is contributed by cysteine 13. Residues histidine 42 and histidine 76 each contribute to the (2E)-4-hydroxy-3-methylbut-2-enyl diphosphate site. Dimethylallyl diphosphate contacts are provided by histidine 42 and histidine 76. 2 residues coordinate isopentenyl diphosphate: histidine 42 and histidine 76. Residue cysteine 98 coordinates [4Fe-4S] cluster. Histidine 126 contacts (2E)-4-hydroxy-3-methylbut-2-enyl diphosphate. Histidine 126 contributes to the dimethylallyl diphosphate binding site. Histidine 126 is a binding site for isopentenyl diphosphate. Glutamate 128 (proton donor) is an active-site residue. Residue threonine 169 participates in (2E)-4-hydroxy-3-methylbut-2-enyl diphosphate binding. Cysteine 230 serves as a coordination point for [4Fe-4S] cluster. (2E)-4-hydroxy-3-methylbut-2-enyl diphosphate is bound by residues serine 258, serine 259, asparagine 260, and serine 306. Residues serine 258, serine 259, asparagine 260, and serine 306 each contribute to the dimethylallyl diphosphate site. Isopentenyl diphosphate is bound by residues serine 258, serine 259, asparagine 260, and serine 306.

It belongs to the IspH family. The cofactor is [4Fe-4S] cluster.

It carries out the reaction isopentenyl diphosphate + 2 oxidized [2Fe-2S]-[ferredoxin] + H2O = (2E)-4-hydroxy-3-methylbut-2-enyl diphosphate + 2 reduced [2Fe-2S]-[ferredoxin] + 2 H(+). The enzyme catalyses dimethylallyl diphosphate + 2 oxidized [2Fe-2S]-[ferredoxin] + H2O = (2E)-4-hydroxy-3-methylbut-2-enyl diphosphate + 2 reduced [2Fe-2S]-[ferredoxin] + 2 H(+). It participates in isoprenoid biosynthesis; dimethylallyl diphosphate biosynthesis; dimethylallyl diphosphate from (2E)-4-hydroxy-3-methylbutenyl diphosphate: step 1/1. Its pathway is isoprenoid biosynthesis; isopentenyl diphosphate biosynthesis via DXP pathway; isopentenyl diphosphate from 1-deoxy-D-xylulose 5-phosphate: step 6/6. Its function is as follows. Catalyzes the conversion of 1-hydroxy-2-methyl-2-(E)-butenyl 4-diphosphate (HMBPP) into a mixture of isopentenyl diphosphate (IPP) and dimethylallyl diphosphate (DMAPP). Acts in the terminal step of the DOXP/MEP pathway for isoprenoid precursor biosynthesis. This is 4-hydroxy-3-methylbut-2-enyl diphosphate reductase from Prosthecochloris aestuarii (strain DSM 271 / SK 413).